We begin with the raw amino-acid sequence, 520 residues long: Transcription factor MYB33 (520 aa).

Positions 1–24 (MSYTSTDSDHNESPAADDNGSDCR) are disordered. 2 consecutive HTH myb-type domains span residues 29-81 (GHAL…ANHL) and 82-136 (RPNL…KRRQ). DNA-binding regions (H-T-H motif) lie at residues 57–81 (WNAV…ANHL) and 109–132 (WARM…NTRI). The span at 331–342 (SSSPPHSDLLDP) shows a compositional bias: low complexity. Disordered stretches follow at residues 331–359 (SSSP…GEES) and 426–447 (EMST…RKPL).

As to expression, mostly expressed in stems, shoot apices, flowers and floral shoot tips, and, to a lower extent, in roots (e.g. root tips), seedlings, leaves and siliques.

Its subcellular location is the nucleus. In terms of biological role, transcriptional activator of alpha-amylase expression that binds to 5'-CAACTGTC-3' motif in target gene promoter. Positive regulator of abscisic acid (ABA) responses leading to growth arrest during seed germination. In vegetative tissues, inhibits growth by reducing cell proliferation. Promotes the expression of aleurone-related genes (e.g. CP1, CP, GASA1, BXL1 and BXL2) in seeds. Together with MYB65 and MYB101, promotes the programmed cell death (PCD) the vacuolation of protein storage vacuoles (PSVs) in the aleurone layers during seed germination. Binds to a GARE site (GA-response element) in the LEAFY promoter, essential for its gibberellic acid (GA)-mediated induction. Together with MYB65, facilitates anther and tapetum development. The chain is Transcription factor MYB33 from Arabidopsis thaliana (Mouse-ear cress).